The chain runs to 276 residues: Large ribosomal subunit protein uL2cy (276 aa).

Disordered regions lie at residues 1 to 25 (MAIH…VKSN) and 225 to 276 (MNPV…RRSK). Residues 7–25 (KTSTPSTRNGTVDSQVKSN) are compositionally biased toward polar residues.

Belongs to the universal ribosomal protein uL2 family. As to quaternary structure, part of the 50S ribosomal subunit.

The protein resides in the plastid. Its subcellular location is the chloroplast. This chain is Large ribosomal subunit protein uL2cy (rpl2-B), found in Coffea arabica (Arabian coffee).